The sequence spans 447 residues: MIKIYDTMTRSLQDFIPLNEGKVNMYVCGPTVYNYIHIGNARSVVAFDTIRRYFEYCGYQVNYISNFTDVDDKIIKGAAEAGMDTKSFSDKFISAFMEDVAALGVKPATKNPRVIDYMDEIIDFVKVLVDKEFAYEANGDVYFRVSKSHHYAKLANKTLEDLEIGASGRVDGEGEIKENPLDFALWKSAKSGEVSWESPWGKGRPGWHIECSVMATEILGDTIDIHGGGADLEFPHHTNEIAQSEAKTGKTFANYWMHNGFVNVDNEKMSKSLGNFITVHDMLKSVDGQVIRFFLATQQYRKPVNFTEKAVHDAEVNLKYLKNTFNLPIQENANDEELEQFVKAFQGAMDDDFNTANGITVIFEMAKWINSGHYTSRVKETFAELLEIFGIVFQEEVLDADIESLIEQRQEARANRDFATADRIRDELAKQGIKLLDTKDGVRWTRD.

Cys-28 provides a ligand contact to Zn(2+). Residues 30-40 (PTVYNYIHIGN) carry the 'HIGH' region motif. 3 residues coordinate Zn(2+): Cys-211, His-236, and Glu-240. Residues 268 to 272 (KMSKS) carry the 'KMSKS' region motif. Lys-271 is a binding site for ATP.

This sequence belongs to the class-I aminoacyl-tRNA synthetase family. As to quaternary structure, monomer. The cofactor is Zn(2+).

The protein resides in the cytoplasm. It catalyses the reaction tRNA(Cys) + L-cysteine + ATP = L-cysteinyl-tRNA(Cys) + AMP + diphosphate. This chain is Cysteine--tRNA ligase, found in Streptococcus agalactiae serotype V (strain ATCC BAA-611 / 2603 V/R).